The following is a 280-amino-acid chain: Pantothenate synthetase (280 aa).

ATP is bound at residue 26-33; sequence MGNLHDGH. The active-site Proton donor is His33. Residue Gln57 coordinates (R)-pantoate. Residue Gln57 coordinates beta-alanine. Residue 147–150 coordinates ATP; the sequence is GKKD. Position 153 (Gln153) interacts with (R)-pantoate. An ATP-binding site is contributed by 184–187; the sequence is LSSR.

The protein belongs to the pantothenate synthetase family. In terms of assembly, homodimer.

The protein localises to the cytoplasm. The enzyme catalyses (R)-pantoate + beta-alanine + ATP = (R)-pantothenate + AMP + diphosphate + H(+). Its pathway is cofactor biosynthesis; (R)-pantothenate biosynthesis; (R)-pantothenate from (R)-pantoate and beta-alanine: step 1/1. Catalyzes the condensation of pantoate with beta-alanine in an ATP-dependent reaction via a pantoyl-adenylate intermediate. This chain is Pantothenate synthetase, found in Verminephrobacter eiseniae (strain EF01-2).